A 463-amino-acid chain; its full sequence is ATP synthase subunit beta (463 aa).

152–159 (GGAGVGKT) lines the ATP pocket.

It belongs to the ATPase alpha/beta chains family. In terms of assembly, F-type ATPases have 2 components, CF(1) - the catalytic core - and CF(0) - the membrane proton channel. CF(1) has five subunits: alpha(3), beta(3), gamma(1), delta(1), epsilon(1). CF(0) has three main subunits: a(1), b(2) and c(9-12). The alpha and beta chains form an alternating ring which encloses part of the gamma chain. CF(1) is attached to CF(0) by a central stalk formed by the gamma and epsilon chains, while a peripheral stalk is formed by the delta and b chains.

It localises to the cell inner membrane. The enzyme catalyses ATP + H2O + 4 H(+)(in) = ADP + phosphate + 5 H(+)(out). Its function is as follows. Produces ATP from ADP in the presence of a proton gradient across the membrane. The catalytic sites are hosted primarily by the beta subunits. This is ATP synthase subunit beta from Shewanella denitrificans (strain OS217 / ATCC BAA-1090 / DSM 15013).